A 465-amino-acid polypeptide reads, in one-letter code: Argininosuccinate lyase (465 aa).

The protein belongs to the lyase 1 family. Argininosuccinate lyase subfamily.

It localises to the cytoplasm. The catalysed reaction is 2-(N(omega)-L-arginino)succinate = fumarate + L-arginine. It participates in amino-acid biosynthesis; L-arginine biosynthesis; L-arginine from L-ornithine and carbamoyl phosphate: step 3/3. This Rhodopseudomonas palustris (strain HaA2) protein is Argininosuccinate lyase.